The following is a 30-amino-acid chain: Photosystem II reaction center protein Psb30 (30 aa).

Residues 1-6 (EVIAQL) are Lumenal-facing. The helical transmembrane segment at 7-21 (TMIAMIGIAGPMIIF) threads the bilayer. The Cytoplasmic segment spans residues 22–30 (LLAVRRGNL).

It belongs to the Psb30/Ycf12 family. In terms of assembly, PSII is composed of 1 copy each of membrane proteins PsbA, PsbB, PsbC, PsbD, PsbE, PsbF, PsbH, PsbI, PsbJ, PsbK, PsbL, PsbM, PsbT, PsbX, PsbY, PsbZ, Psb30/Ycf12, peripheral proteins PsbO, CyanoQ (PsbQ), PsbU, PsbV and a large number of cofactors. It forms dimeric complexes. PSII binds multiple chlorophylls, carotenoids and specific lipids. serves as cofactor.

Its subcellular location is the cellular thylakoid membrane. Functionally, a core subunit of photosystem II (PSII), probably helps stabilize the reaction center. PSII is a light-driven water plastoquinone oxidoreductase, using light energy to abstract electrons from H(2)O, generating a proton gradient subsequently used for ATP formation. This Thermostichus vulcanus (Synechococcus vulcanus) protein is Photosystem II reaction center protein Psb30.